The following is a 180-amino-acid chain: Oligoribonuclease (180 aa).

Residues 7 to 170 enclose the Exonuclease domain; it reads LIWIDLEMTG…DDIRESIAEL (164 aa). Residue Y128 is part of the active site.

The protein belongs to the oligoribonuclease family.

It localises to the cytoplasm. In terms of biological role, 3'-to-5' exoribonuclease specific for small oligoribonucleotides. This chain is Oligoribonuclease, found in Pseudomonas entomophila (strain L48).